Consider the following 350-residue polypeptide: Pleckstrin (350 aa).

Residues 4–101 enclose the PH 1 domain; it reads KRIREGYLVK…WVRDIKKAIK (98 aa). At K64 the chain carries N6-acetyllysine. Residues S113 and S117 each carry the phosphoserine modification. Positions 136 to 221 constitute a DEP domain; sequence PEKGIKELNL…NPDAFYYFPD (86 aa). The PH 2 domain maps to 244–347; sequence IIIKQGCLLK…WIKAIQVASR (104 aa).

Functionally, major protein kinase C substrate of platelets. The sequence is that of Pleckstrin (Plek) from Rattus norvegicus (Rat).